The following is a 268-amino-acid chain: Indole-3-glycerol phosphate synthase 2 (268 aa).

Belongs to the TrpC family.

It carries out the reaction 1-(2-carboxyphenylamino)-1-deoxy-D-ribulose 5-phosphate + H(+) = (1S,2R)-1-C-(indol-3-yl)glycerol 3-phosphate + CO2 + H2O. It participates in amino-acid biosynthesis; L-tryptophan biosynthesis; L-tryptophan from chorismate: step 4/5. The polypeptide is Indole-3-glycerol phosphate synthase 2 (trpC2) (Ralstonia nicotianae (strain ATCC BAA-1114 / GMI1000) (Ralstonia solanacearum)).